Here is a 239-residue protein sequence, read N- to C-terminus: Leucyl/phenylalanyl-tRNA--protein transferase (239 aa).

It belongs to the L/F-transferase family.

Its subcellular location is the cytoplasm. The catalysed reaction is N-terminal L-lysyl-[protein] + L-leucyl-tRNA(Leu) = N-terminal L-leucyl-L-lysyl-[protein] + tRNA(Leu) + H(+). The enzyme catalyses N-terminal L-arginyl-[protein] + L-leucyl-tRNA(Leu) = N-terminal L-leucyl-L-arginyl-[protein] + tRNA(Leu) + H(+). It catalyses the reaction L-phenylalanyl-tRNA(Phe) + an N-terminal L-alpha-aminoacyl-[protein] = an N-terminal L-phenylalanyl-L-alpha-aminoacyl-[protein] + tRNA(Phe). Functions in the N-end rule pathway of protein degradation where it conjugates Leu, Phe and, less efficiently, Met from aminoacyl-tRNAs to the N-termini of proteins containing an N-terminal arginine or lysine. The chain is Leucyl/phenylalanyl-tRNA--protein transferase from Syntrophus aciditrophicus (strain SB).